We begin with the raw amino-acid sequence, 223 residues long: Putative germin-like protein 2-2 (223 aa).

The signal sequence occupies residues 1–28; sequence MAAVGACFLQQLAVVALLALWCSHGAIA. Cysteine 38 and cysteine 53 are oxidised to a cystine. The region spanning 67–217 is the Cupin type-1 domain; it reads SGLHMAGNTT…AFQVDKNIID (151 aa). N-linked (GlcNAc...) asparagine glycans are attached at residues asparagine 74 and asparagine 82. 4 residues coordinate Mn(2+): histidine 115, histidine 117, glutamate 122, and histidine 163. N-linked (GlcNAc...) asparagine glycosylation occurs at asparagine 168.

Belongs to the germin family. Oligomer (believed to be a pentamer but probably hexamer).

Its subcellular location is the secreted. The protein resides in the extracellular space. It localises to the apoplast. Its function is as follows. May play a role in plant defense. Probably has no oxalate oxidase activity even if the active site is conserved. This Oryza sativa subsp. japonica (Rice) protein is Putative germin-like protein 2-2.